The primary structure comprises 120 residues: Large ribosomal subunit protein uL18 (120 aa).

This sequence belongs to the universal ribosomal protein uL18 family. Part of the 50S ribosomal subunit; part of the 5S rRNA/L5/L18/L25 subcomplex. Contacts the 5S and 23S rRNAs.

Its function is as follows. This is one of the proteins that bind and probably mediate the attachment of the 5S RNA into the large ribosomal subunit, where it forms part of the central protuberance. This chain is Large ribosomal subunit protein uL18, found in Bacillus cytotoxicus (strain DSM 22905 / CIP 110041 / 391-98 / NVH 391-98).